Consider the following 203-residue polypeptide: CCG-binding protein 1 (203 aa).

The interval 156-178 is disordered; sequence IPDGLPKSEQELEEEEKSKMPDS. The segment covering 161 to 175 has biased composition (basic and acidic residues); sequence PKSEQELEEEEKSKM.

Homotetramer. Interacts with MEE12/CCG, MED7A, MED7B, MED9, AGL49, AGL53, AGL75, AGL80, AGL81, AGL82, AGL103 and NRPB1 (via CTD). In terms of tissue distribution, expressed in roots, leaves, stems and flowers. Expressed in the central cell of mature ovules.

The protein resides in the nucleus. It is found in the cytoplasm. Functionally, required for the development of the one-cell zygote and endosperm in embryos. Required for micropylar pollen tube guidance, but has no effect on ovule development and gametophytic cell fate specification. May connect transcription factors and the Pol II machinery to regulate pollen tube attraction, via its interactions with AGAMOUS-like (AGL) transcription factors, MEE14/CCG and the Mediator complex. This is CCG-binding protein 1 from Arabidopsis thaliana (Mouse-ear cress).